We begin with the raw amino-acid sequence, 667 residues long: DNA ligase (667 aa).

Residues 32–36 (DSVYD), 81–82 (SL), and Glu-111 each bind NAD(+). Residue Lys-113 is the N6-AMP-lysine intermediate of the active site. NAD(+) contacts are provided by Arg-134, Glu-168, Lys-285, and Lys-309. Zn(2+) is bound by residues Cys-403, Cys-406, Cys-421, and Cys-426. Residues 588-667 (VGDNPFAGKT…DNLIEQLNLI (80 aa)) form the BRCT domain.

Belongs to the NAD-dependent DNA ligase family. LigA subfamily. The cofactor is Mg(2+). It depends on Mn(2+) as a cofactor.

The enzyme catalyses NAD(+) + (deoxyribonucleotide)n-3'-hydroxyl + 5'-phospho-(deoxyribonucleotide)m = (deoxyribonucleotide)n+m + AMP + beta-nicotinamide D-nucleotide.. Its function is as follows. DNA ligase that catalyzes the formation of phosphodiester linkages between 5'-phosphoryl and 3'-hydroxyl groups in double-stranded DNA using NAD as a coenzyme and as the energy source for the reaction. It is essential for DNA replication and repair of damaged DNA. This chain is DNA ligase, found in Lysinibacillus sphaericus (strain C3-41).